The sequence spans 273 residues: Translation initiation factor 2 subunit alpha (273 aa).

The S1 motif domain occupies 12-83 (GEFVVATVKN…EKGHIDLSLK (72 aa)).

This sequence belongs to the eIF-2-alpha family. In terms of assembly, heterotrimer composed of an alpha, a beta and a gamma chain.

Functionally, eIF-2 functions in the early steps of protein synthesis by forming a ternary complex with GTP and initiator tRNA. The chain is Translation initiation factor 2 subunit alpha from Thermococcus gammatolerans (strain DSM 15229 / JCM 11827 / EJ3).